Reading from the N-terminus, the 599-residue chain is Elongation factor 4 (599 aa).

A tr-type G domain is found at 2-184 (KNIRNFSIIA…EIVAKIPAPK (183 aa)). GTP contacts are provided by residues 14–19 (DHGKST) and 131–134 (NKID).

It belongs to the TRAFAC class translation factor GTPase superfamily. Classic translation factor GTPase family. LepA subfamily.

It is found in the cell inner membrane. It carries out the reaction GTP + H2O = GDP + phosphate + H(+). Its function is as follows. Required for accurate and efficient protein synthesis under certain stress conditions. May act as a fidelity factor of the translation reaction, by catalyzing a one-codon backward translocation of tRNAs on improperly translocated ribosomes. Back-translocation proceeds from a post-translocation (POST) complex to a pre-translocation (PRE) complex, thus giving elongation factor G a second chance to translocate the tRNAs correctly. Binds to ribosomes in a GTP-dependent manner. This chain is Elongation factor 4, found in Mannheimia succiniciproducens (strain KCTC 0769BP / MBEL55E).